The chain runs to 396 residues: Putative nickel insertion protein (396 aa).

The protein belongs to the LarC family.

In Methanosarcina mazei (strain ATCC BAA-159 / DSM 3647 / Goe1 / Go1 / JCM 11833 / OCM 88) (Methanosarcina frisia), this protein is Putative nickel insertion protein.